A 98-amino-acid chain; its full sequence is Large ribosomal subunit protein uL23 (98 aa).

It belongs to the universal ribosomal protein uL23 family. In terms of assembly, part of the 50S ribosomal subunit. Contacts protein L29, and trigger factor when it is bound to the ribosome.

In terms of biological role, one of the early assembly proteins it binds 23S rRNA. One of the proteins that surrounds the polypeptide exit tunnel on the outside of the ribosome. Forms the main docking site for trigger factor binding to the ribosome. The sequence is that of Large ribosomal subunit protein uL23 from Bordetella avium (strain 197N).